Here is a 376-residue protein sequence, read N- to C-terminus: Succinyl-diaminopimelate desuccinylase (376 aa).

A Zn(2+)-binding site is contributed by His-67. The active site involves Asp-69. Asp-100 is a binding site for Zn(2+). Residue Glu-134 is the Proton acceptor of the active site. 3 residues coordinate Zn(2+): Glu-135, Glu-163, and His-349.

This sequence belongs to the peptidase M20A family. DapE subfamily. In terms of assembly, homodimer. It depends on Zn(2+) as a cofactor. Co(2+) serves as cofactor.

It carries out the reaction N-succinyl-(2S,6S)-2,6-diaminopimelate + H2O = (2S,6S)-2,6-diaminopimelate + succinate. The protein operates within amino-acid biosynthesis; L-lysine biosynthesis via DAP pathway; LL-2,6-diaminopimelate from (S)-tetrahydrodipicolinate (succinylase route): step 3/3. Functionally, catalyzes the hydrolysis of N-succinyl-L,L-diaminopimelic acid (SDAP), forming succinate and LL-2,6-diaminopimelate (DAP), an intermediate involved in the bacterial biosynthesis of lysine and meso-diaminopimelic acid, an essential component of bacterial cell walls. The polypeptide is Succinyl-diaminopimelate desuccinylase (Nitrosomonas europaea (strain ATCC 19718 / CIP 103999 / KCTC 2705 / NBRC 14298)).